A 149-amino-acid polypeptide reads, in one-letter code: Transcriptional repressor NrdR (149 aa).

Residues 3 to 34 fold into a zinc finger; the sequence is CPFCGFEESKVVDSRSTDDNTTIRRRRECLKC. The ATP-cone domain maps to 49 to 139; sequence ILVIKKDLTR…VYRQFKDIDT (91 aa).

It belongs to the NrdR family. The cofactor is Zn(2+).

Its function is as follows. Negatively regulates transcription of bacterial ribonucleotide reductase nrd genes and operons by binding to NrdR-boxes. In Clostridium beijerinckii (strain ATCC 51743 / NCIMB 8052) (Clostridium acetobutylicum), this protein is Transcriptional repressor NrdR.